Here is a 199-residue protein sequence, read N- to C-terminus: Dephospho-CoA kinase (199 aa).

Residues 3 to 199 (KVGLTGGICS…DLLEFFTLYQ (197 aa)) enclose the DPCK domain. Residue 11-16 (CSGKST) participates in ATP binding.

This sequence belongs to the CoaE family.

It localises to the cytoplasm. It carries out the reaction 3'-dephospho-CoA + ATP = ADP + CoA + H(+). It functions in the pathway cofactor biosynthesis; coenzyme A biosynthesis; CoA from (R)-pantothenate: step 5/5. Catalyzes the phosphorylation of the 3'-hydroxyl group of dephosphocoenzyme A to form coenzyme A. The protein is Dephospho-CoA kinase of Clostridium perfringens (strain 13 / Type A).